The sequence spans 330 residues: GTPase Obg (330 aa).

In terms of domain architecture, Obg spans 1 to 159 (MQFIDQARIT…WPLQLELKLL (159 aa)). Residues 160 to 328 (AEVGIIGLPN…LLERVWKELG (169 aa)) enclose the OBG-type G domain. Residues 166 to 173 (GLPNAGKS), 191 to 195 (FTTLV), 213 to 216 (DIPG), 280 to 283 (NKQE), and 309 to 311 (SAA) each bind ATP. Positions 173 and 193 each coordinate Mg(2+).

This sequence belongs to the TRAFAC class OBG-HflX-like GTPase superfamily. OBG GTPase family. In terms of assembly, monomer. Mg(2+) serves as cofactor.

It is found in the cytoplasm. An essential GTPase which binds GTP, GDP and possibly (p)ppGpp with moderate affinity, with high nucleotide exchange rates and a fairly low GTP hydrolysis rate. Plays a role in control of the cell cycle, stress response, ribosome biogenesis and in those bacteria that undergo differentiation, in morphogenesis control. The chain is GTPase Obg from Parasynechococcus marenigrum (strain WH8102).